The following is a 118-amino-acid chain: MKKSYRVKKEKEFQQVFNKKQSCANRRFVVYVLEKPQQAHFRVGISVGKKIGNAVTRNAVKRKIRASLFQLKDRISPEIDFIVIARPGLEKLSSEEVKANLTHVLNLAKILDVREGIE.

This sequence belongs to the RnpA family. As to quaternary structure, consists of a catalytic RNA component (M1 or rnpB) and a protein subunit.

The catalysed reaction is Endonucleolytic cleavage of RNA, removing 5'-extranucleotides from tRNA precursor.. RNaseP catalyzes the removal of the 5'-leader sequence from pre-tRNA to produce the mature 5'-terminus. It can also cleave other RNA substrates such as 4.5S RNA. The protein component plays an auxiliary but essential role in vivo by binding to the 5'-leader sequence and broadening the substrate specificity of the ribozyme. The polypeptide is Ribonuclease P protein component (Enterococcus faecalis (strain ATCC 700802 / V583)).